A 101-amino-acid polypeptide reads, in one-letter code: Small ribosomal subunit protein uS14A (101 aa).

The protein belongs to the universal ribosomal protein uS14 family. In terms of assembly, part of the 30S ribosomal subunit. Contacts proteins S3 and S10.

Binds 16S rRNA, required for the assembly of 30S particles and may also be responsible for determining the conformation of the 16S rRNA at the A site. This chain is Small ribosomal subunit protein uS14A, found in Salinispora tropica (strain ATCC BAA-916 / DSM 44818 / JCM 13857 / NBRC 105044 / CNB-440).